A 378-amino-acid polypeptide reads, in one-letter code: Probable cytochrome oxidase subunit 2 (378 aa).

Residues 1–8 are Cytoplasmic-facing; the sequence is MIDYEFLR. A helical membrane pass occupies residues 9–28; sequence FIWWVLVIVLLIGFSVTDGF. Over 29 to 79 the chain is Periplasmic; sequence DMGVTALLPVIGKKEVERRIMINTIAPHWDGNQVWLLTAGGAIFAAWPIVY. Residues 80–99 traverse the membrane as a helical segment; that stretch reads AVSFSGFYIALVLVLAALFL. The Cytoplasmic segment spans residues 100-122; sequence RPLGFEYRAKIDNPTWRSVWDWG. Residues 123-142 traverse the membrane as a helical segment; that stretch reads LFAGGFVPALVFGVAFGNLL. Residues 143–164 are Periplasmic-facing; the sequence is QGVPFHFNELTQVTYTGSFFEL. A helical membrane pass occupies residues 165–184; sequence LNPFALLCGVISLSMLVTHG. The Cytoplasmic segment spans residues 185-205; that stretch reads ANWLQMKTTEALRDRARTVSQ. The helical transmembrane segment at 206–224 threads the bilayer; that stretch reads IGSIVTLIAFVLAGVWLYS. Residues 225-261 lie on the Periplasmic side of the membrane; that stretch reads KDGYVVTSTIDHFAPSSPMNKEVAVETGAWFRNFNEM. A helical membrane pass occupies residues 262–281; sequence PILWIFPALAVVAALLNAAF. Topologically, residues 282–291 are cytoplasmic; it reads SKANRCGFAF. The helical transmembrane segment at 292–311 threads the bilayer; that stretch reads FFSALTMAGVIITAAVSMFP. Residues 312-335 are Periplasmic-facing; the sequence is FVMPSSSHPEQSLLMWDSTSSELT. A helical transmembrane segment spans residues 336 to 355; sequence LTLMLIFAVVFVVIALAYTI. Residues 356–378 are Cytoplasmic-facing; sequence WSYSKMFGRLDANFIDKNKHSLY.

It belongs to the cytochrome ubiquinol oxidase subunit 2 family. As to quaternary structure, heterodimer of subunits I and II.

Its subcellular location is the cell inner membrane. Its function is as follows. Probable cytochrome oxidase subunit. The protein is Probable cytochrome oxidase subunit 2 of Haemophilus influenzae (strain ATCC 51907 / DSM 11121 / KW20 / Rd).